Reading from the N-terminus, the 249-residue chain is MHCLPLTLLLLLLCSRAEAEEIIGGTESKPHSRPYMAHLEILTLRNHLASCGGFLIRRNFVLTAAHCAGRFIMVTLGAHNIQKKEDTWQKLEVIKQFPHPKYDDLTLRHDIMLLKLKEKANLTLAVGTLPLSPQFNFVPPGRMCRVAGWGKRQVNGSGSDTLQEVKLRLMDPQACRHYMAFDHNLQLCVGNPRKTKSAFKGDSGGPLLCAGVAQGIVSYGQNDAKPPAVFTRISHYRPWINKVLKQNKA.

A signal peptide spans 1–19 (MHCLPLTLLLLLLCSRAEA). The propeptide at 20 to 21 (EE) is activation peptide. In terms of domain architecture, Peptidase S1 spans 22–245 (IIGGTESKPH…YRPWINKVLK (224 aa)). An intrachain disulfide couples Cys-51 to Cys-67. Catalysis depends on charge relay system residues His-66 and Asp-110. 2 disulfide bridges follow: Cys-144/Cys-209 and Cys-175/Cys-188. Catalysis depends on Ser-203, which acts as the Charge relay system.

The protein belongs to the peptidase S1 family. Granzyme subfamily.

It localises to the secreted. The protein resides in the cytoplasmic granule. The enzyme catalyses Preferential cleavage: Phe-|-Xaa &gt; Tyr-|-Xaa &gt; Trp-|-Xaa &gt; Leu-|-Xaa.. Its function is as follows. Major secreted protease of mast cells with suspected roles in vasoactive peptide generation, extracellular matrix degradation, and regulation of gland secretion. The protein is Chymase (CMA1) of Canis lupus familiaris (Dog).